The primary structure comprises 403 residues: Probable tRNA sulfurtransferase (403 aa).

The 106-residue stretch at glutamine 60–threonine 165 folds into the THUMP domain. ATP is bound by residues methionine 183–leucine 184, histidine 208–phenylalanine 209, arginine 265, glycine 287, and glutamine 296.

The protein belongs to the ThiI family.

It localises to the cytoplasm. It carries out the reaction [ThiI sulfur-carrier protein]-S-sulfanyl-L-cysteine + a uridine in tRNA + 2 reduced [2Fe-2S]-[ferredoxin] + ATP + H(+) = [ThiI sulfur-carrier protein]-L-cysteine + a 4-thiouridine in tRNA + 2 oxidized [2Fe-2S]-[ferredoxin] + AMP + diphosphate. It catalyses the reaction [ThiS sulfur-carrier protein]-C-terminal Gly-Gly-AMP + S-sulfanyl-L-cysteinyl-[cysteine desulfurase] + AH2 = [ThiS sulfur-carrier protein]-C-terminal-Gly-aminoethanethioate + L-cysteinyl-[cysteine desulfurase] + A + AMP + 2 H(+). The protein operates within cofactor biosynthesis; thiamine diphosphate biosynthesis. Functionally, catalyzes the ATP-dependent transfer of a sulfur to tRNA to produce 4-thiouridine in position 8 of tRNAs, which functions as a near-UV photosensor. Also catalyzes the transfer of sulfur to the sulfur carrier protein ThiS, forming ThiS-thiocarboxylate. This is a step in the synthesis of thiazole, in the thiamine biosynthesis pathway. The sulfur is donated as persulfide by IscS. In Listeria monocytogenes serovar 1/2a (strain ATCC BAA-679 / EGD-e), this protein is Probable tRNA sulfurtransferase.